The following is a 105-amino-acid chain: Large ribosomal subunit protein uL24 (105 aa).

The protein belongs to the universal ribosomal protein uL24 family. As to quaternary structure, part of the 50S ribosomal subunit.

Functionally, one of two assembly initiator proteins, it binds directly to the 5'-end of the 23S rRNA, where it nucleates assembly of the 50S subunit. In terms of biological role, one of the proteins that surrounds the polypeptide exit tunnel on the outside of the subunit. This Methylobacillus flagellatus (strain ATCC 51484 / DSM 6875 / VKM B-1610 / KT) protein is Large ribosomal subunit protein uL24.